Consider the following 873-residue polypeptide: Leucine--tRNA ligase (873 aa).

The 'HIGH' region motif lies at 42–52; it reads PYPSGKLHMGH. The interval 624–643 is disordered; sequence PVEIGGTEKMSKSKNNGVDP. The 'KMSKS' region signature appears at 632 to 636; sequence KMSKS. Position 635 (lysine 635) interacts with ATP.

This sequence belongs to the class-I aminoacyl-tRNA synthetase family.

The protein resides in the cytoplasm. It carries out the reaction tRNA(Leu) + L-leucine + ATP = L-leucyl-tRNA(Leu) + AMP + diphosphate. This Pseudomonas aeruginosa (strain ATCC 15692 / DSM 22644 / CIP 104116 / JCM 14847 / LMG 12228 / 1C / PRS 101 / PAO1) protein is Leucine--tRNA ligase.